Reading from the N-terminus, the 299-residue chain is Apolipoprotein E (299 aa).

An N-terminal signal peptide occupies residues 1–18 (MKVLWAVLVVTLLAGCRA). 7 repeat units span residues 74–95 (LLME…QELA), 96–117 (PMAE…ARLG), 118–139 (ADME…AMLG), 140–161 (QSAE…KRLL), 162–183 (RDAE…EGAE), 184–205 (RGVS…LRSA), and 224–245 (GRLE…EQME). The tract at residues 74-245 (LLMEDTMKEV…RLDVVREQME (172 aa)) is 8 X 22 AA approximate tandem repeats. Methionine sulfoxide is present on Met137. Ser141 carries the post-translational modification Phosphoserine. The interval 152–162 (HLRKMRKRLLR) is LDL and other lipoprotein receptors binding. 156–159 (MRKR) contacts heparin. The lipid-binding and lipoprotein association stretch occupies residues 204–273 (SALTSQPLRE…GWFEPMVEDM (70 aa)). 219–226 (GERLRGRL) provides a ligand contact to heparin. The segment at 261–273 (RLKGWFEPMVEDM) is specificity for association with VLDL.

Belongs to the apolipoprotein A1/A4/E family. Homotetramer. May interact with ABCA1; functionally associated with ABCA1 in the biogenesis of HDLs. May interact with APP/A4 amyloid-beta peptide; the interaction is extremely stable in vitro but its physiological significance is unclear. May interact with MAPT. May interact with MAP2. In the cerebrospinal fluid, interacts with secreted SORL1. Interacts with PMEL; this allows the loading of PMEL luminal fragment on ILVs to induce fibril nucleation. Post-translationally, APOE exists as multiple glycosylated and sialylated glycoforms within cells and in plasma. The extent of glycosylation and sialylation are tissue and context specific. In terms of processing, glycated in plasma VLDL. Phosphorylated by FAM20C in the extracellular medium.

Its subcellular location is the secreted. The protein resides in the extracellular space. The protein localises to the extracellular matrix. It localises to the extracellular vesicle. It is found in the endosome. Its subcellular location is the multivesicular body. In terms of biological role, APOE is an apolipoprotein, a protein associating with lipid particles, that mainly functions in lipoprotein-mediated lipid transport between organs via the plasma and interstitial fluids. APOE is a core component of plasma lipoproteins and is involved in their production, conversion and clearance. Apolipoproteins are amphipathic molecules that interact both with lipids of the lipoprotein particle core and the aqueous environment of the plasma. As such, APOE associates with chylomicrons, chylomicron remnants, very low density lipoproteins (VLDL) and intermediate density lipoproteins (IDL) but shows a preferential binding to high-density lipoproteins (HDL). It also binds a wide range of cellular receptors including the LDL receptor/LDLR, the LDL receptor-related proteins LRP1, LRP2 and LRP8 and the very low-density lipoprotein receptor/VLDLR that mediate the cellular uptake of the APOE-containing lipoprotein particles. Finally, APOE also has a heparin-binding activity and binds heparan-sulfate proteoglycans on the surface of cells, a property that supports the capture and the receptor-mediated uptake of APOE-containing lipoproteins by cells. A main function of APOE is to mediate lipoprotein clearance through the uptake of chylomicrons, VLDLs, and HDLs by hepatocytes. APOE is also involved in the biosynthesis by the liver of VLDLs as well as their uptake by peripheral tissues ensuring the delivery of triglycerides and energy storage in muscle, heart and adipose tissues. By participating in the lipoprotein-mediated distribution of lipids among tissues, APOE plays a critical role in plasma and tissues lipid homeostasis. APOE is also involved in two steps of reverse cholesterol transport, the HDLs-mediated transport of cholesterol from peripheral tissues to the liver, and thereby plays an important role in cholesterol homeostasis. First, it is functionally associated with ABCA1 in the biogenesis of HDLs in tissues. Second, it is enriched in circulating HDLs and mediates their uptake by hepatocytes. APOE also plays an important role in lipid transport in the central nervous system, regulating neuron survival and sprouting. This is Apolipoprotein E (APOE) from Erethizon dorsatum (North American porcupine).